A 680-amino-acid chain; its full sequence is Penicillin-binding protein 2B (680 aa).

The Cytoplasmic segment spans residues 1-8 (MRKFNSHS). The helical transmembrane segment at 9 to 29 (IPIRLNLLFSIVILLFMTIIG) threads the bilayer. Topologically, residues 30-680 (RLLYMQVLNK…NLYQKYHPMN (651 aa)) are extracellular. Catalysis depends on serine 386, which acts as the Acyl-ester intermediate.

The protein belongs to the transpeptidase family. In terms of assembly, interacts with MreC in the elongasome.

The protein resides in the cell membrane. In terms of biological role, a transpeptidase that forms peptide cross-links between adjacent glycan strands in cell wall peptidoglycan (PG). Part of the elongasome machinery that synthesizes peripheral PG. This Streptococcus pneumoniae serotype 2 (strain D39 / NCTC 7466) protein is Penicillin-binding protein 2B.